A 409-amino-acid polypeptide reads, in one-letter code: MKIIVKIPVWMLLSLFILSPTTETIYTSGLPSLTKYFSIDGCITQITSTLYFLGFAVGILSLGRLSDIYGRRPIVLLGLFIYIVSSIISIFSVNIEMLMIARFIQAFGVSVGSVIGQSMARDSYQGAELSYVYAILSPWLLFIPSLGSYIGGYIIEYSSWHYVFVFFSLIGTILLALYYKILPETNYYIDFSQSSKYFEVFNIIIKDKILWLYAFIIGAFNGIYYGFFIEAPFILIDKMKVLPSFYGKLAFLLSFSAIFGGFLGGYLIKKRQVHDKKVMSIGFIFSLCGCILFVVNAFILEFILVSNGLAISMIFVPMMIHIIGHSLLIPITLRYALEDYAKVTGTAGSIFGAIYYIVIAAVTYCVSKIHGETISNFSLLCLVSSISSVISFYYICILYKKKSIVANEK.

A run of 12 helical transmembrane segments spans residues 3 to 23 (IIVK…PTTE), 43 to 63 (ITQI…LSLG), 73 to 93 (PIVL…IFSV), 95 to 115 (IEML…GSVI), 135 to 155 (ILSP…GYII), 162 to 182 (YVFV…YKIL), 209 to 229 (ILWL…GFFI), 248 to 268 (KLAF…GYLI), 283 to 303 (FIFS…LEFI), 309 to 329 (LAIS…SLLI), 346 to 366 (TAGS…TYCV), and 379 to 399 (LLCL…CILY).

Belongs to the major facilitator superfamily. Bcr/CmlA family.

Its subcellular location is the cell inner membrane. This is an uncharacterized protein from Rickettsia typhi (strain ATCC VR-144 / Wilmington).